The primary structure comprises 213 residues: FMN-dependent NADH:quinone oxidoreductase 1 (213 aa).

An FMN-binding site is contributed by 18–20 (SVS).

The protein belongs to the azoreductase type 1 family. In terms of assembly, homodimer. It depends on FMN as a cofactor.

It catalyses the reaction 2 a quinone + NADH + H(+) = 2 a 1,4-benzosemiquinone + NAD(+). The catalysed reaction is N,N-dimethyl-1,4-phenylenediamine + anthranilate + 2 NAD(+) = 2-(4-dimethylaminophenyl)diazenylbenzoate + 2 NADH + 2 H(+). Functionally, quinone reductase that provides resistance to thiol-specific stress caused by electrophilic quinones. Also exhibits azoreductase activity. Catalyzes the reductive cleavage of the azo bond in aromatic azo compounds to the corresponding amines. The protein is FMN-dependent NADH:quinone oxidoreductase 1 of Bacillus cereus (strain ZK / E33L).